Reading from the N-terminus, the 90-residue chain is Large ribosomal subunit protein eL31 (90 aa).

The protein belongs to the eukaryotic ribosomal protein eL31 family.

This chain is Large ribosomal subunit protein eL31, found in Thermococcus gammatolerans (strain DSM 15229 / JCM 11827 / EJ3).